The primary structure comprises 527 residues: MADNRDPASDQMKHWKEQRAAQKPDVLTTGGGNPVGDKLNSLTVGPRGPLLVQDVVFTDEMAHFDRERIPERVVHAKGAGAFGYFEVTHDITRYSKAKVFEHIGKRTPIAVRFSTVAGESGSADTVRDPRGFAVKFYTEDGNWDLVGNNTPIFFIRDALLFPSFIHSQKRNPQTHLKDPDMVWDFWSLRPESLHQVSFLFSDRGIPDGHRHMNGYGSHTFKLVNANGEAVYCKFHYKTDQGIKNLSVEDAARLAHEDPDYGLRDLFNAIATGNYPSWTLYIQVMTFSEAEIFPFNPFDLTKVWPHGDYPLIPVGKLVLNRNPVNYFAEVEQLAFDPSNMPPGIEPSPDKMLQGRLFAYPDTHRHRLGPNYLQIPVNCPYRARVANYQRDGPMCMMDNQGGAPNYYPNSFSAPEHQPSALEHRTHFSGDVQRFNSANDDNVTQVRTFYLKVLNEEQRKRLCENIAGHLKDAQLFIQKKAVKNFSDVHPEYGSRIQALLDKYNEEKPKNAVHTYVQHGSHLSAREKANL.

The span at 1-22 shows a compositional bias: basic and acidic residues; it reads MADNRDPASDQMKHWKEQRAAQ. Residues 1 to 42 are disordered; that stretch reads MADNRDPASDQMKHWKEQRAAQKPDVLTTGGGNPVGDKLNSL. A Blocked amino end (Ala); alternate modification is found at alanine 2. Alanine 2 bears the N-acetylalanine; alternate mark. Serine 9 is subject to Phosphoserine. Lysine 13 carries the N6-succinyllysine modification. Catalysis depends on residues histidine 75 and asparagine 148. Residues histidine 194, phenylalanine 198, serine 201, arginine 203, asparagine 213, and tyrosine 215 each contribute to the NADP(+) site. Residue lysine 221 is modified to N6-succinyllysine. At lysine 233 the chain carries N6-acetyllysine. The NADP(+) site is built by lysine 237, tryptophan 303, and histidine 305. Tyrosine 358 contacts heme. 2 positions are modified to phosphoserine: serine 417 and serine 434. NADP(+)-binding residues include glutamine 442, threonine 445, and phenylalanine 446. N6-acetyllysine; alternate is present on residues lysine 449 and lysine 480. An N6-succinyllysine; alternate mark is found at lysine 449 and lysine 480. Lysine 499 bears the N6-acetyllysine mark. Threonine 511 carries the phosphothreonine modification. Serine 517 carries the phosphoserine modification. Residues 524–527 carry the Microbody targeting signal; atypical motif; that stretch reads KANL.

This sequence belongs to the catalase family. In terms of assembly, homotetramer. Interacts (via microbody targeting signal) with PEX5, monomeric form interacts with PEX5, leading to its translocation into peroxisomes. Heme serves as cofactor. Requires NADP(+) as cofactor.

The protein localises to the peroxisome matrix. The enzyme catalyses 2 H2O2 = O2 + 2 H2O. Functionally, catalyzes the degradation of hydrogen peroxide (H(2)O(2)) generated by peroxisomal oxidases to water and oxygen, thereby protecting cells from the toxic effects of hydrogen peroxide. Promotes growth of cells including T-cells, B-cells, myeloid leukemia cells, melanoma cells, mastocytoma cells and normal and transformed fibroblast cells. In Bos taurus (Bovine), this protein is Catalase (CAT).